The sequence spans 679 residues: DNA-directed RNA polymerase subunit beta' (679 aa).

Zn(2+)-binding residues include C69, C71, C84, and C87. Residues D486, D488, and D490 each contribute to the Mg(2+) site.

It belongs to the RNA polymerase beta' chain family. RpoC1 subfamily. In terms of assembly, in plastids the minimal PEP RNA polymerase catalytic core is composed of four subunits: alpha, beta, beta', and beta''. When a (nuclear-encoded) sigma factor is associated with the core the holoenzyme is formed, which can initiate transcription. Mg(2+) serves as cofactor. It depends on Zn(2+) as a cofactor.

It localises to the plastid. It is found in the chloroplast. It catalyses the reaction RNA(n) + a ribonucleoside 5'-triphosphate = RNA(n+1) + diphosphate. Functionally, DNA-dependent RNA polymerase catalyzes the transcription of DNA into RNA using the four ribonucleoside triphosphates as substrates. The chain is DNA-directed RNA polymerase subunit beta' from Physcomitrium patens (Spreading-leaved earth moss).